Here is a 216-residue protein sequence, read N- to C-terminus: Ribonuclease HII (216 aa).

Residues 33-216 enclose the RNase H type-2 domain; sequence WPVAGADEAG…RMSFRPFRQV (184 aa). Residues Asp39, Glu40, and Asp130 each contribute to the a divalent metal cation site.

This sequence belongs to the RNase HII family. Requires Mn(2+) as cofactor. It depends on Mg(2+) as a cofactor.

Its subcellular location is the cytoplasm. The catalysed reaction is Endonucleolytic cleavage to 5'-phosphomonoester.. Endonuclease that specifically degrades the RNA of RNA-DNA hybrids. In Rhizobium meliloti (strain 1021) (Ensifer meliloti), this protein is Ribonuclease HII.